An 82-amino-acid chain; its full sequence is Conotoxin Cal30 (82 aa).

The N-terminal stretch at 1–19 is a signal peptide; that stretch reads MEKLIILLLVASLLVTTDS.

Post-translationally, may contain 5 disulfide bonds. Expressed by the venom duct.

The protein localises to the secreted. Functionally, probable neurotoxin. This is Conotoxin Cal30 from Californiconus californicus (California cone).